A 464-amino-acid chain; its full sequence is DNA repair protein KRE29 (464 aa).

The disordered stretch occupies residues 1–69; it reads MGSVNSSPNE…SDEEFSSLEN (69 aa). Positions 53–65 are enriched in acidic residues; it reads PENDSLNSDEEFS. 2 positions are modified to phosphoserine: Ser-81 and Ser-101.

As to quaternary structure, component of the Smc5-Smc6 complex which consists of KRE29, MMS21, NSE1, NSE3, NSE4, NSE5, SMC5 and SMC6. Interacts with NSE5.

The protein resides in the nucleus. The protein localises to the cytoplasm. Its function is as follows. Acts in a DNA repair pathway for removal of UV-induced DNA damage that is distinct from classical nucleotide excision repair and in repair of ionizing radiation damage. Functions in homologous recombination repair of DNA double strand breaks and in recovery of stalled replication forks. This chain is DNA repair protein KRE29 (KRE29), found in Saccharomyces cerevisiae (strain ATCC 204508 / S288c) (Baker's yeast).